Here is a 322-residue protein sequence, read N- to C-terminus: 3-alpha-hydroxysteroid dehydrogenase (322 aa).

At Met-1 the chain carries Blocked amino end (Met). Residues 20 to 24 and Asp-50 contribute to the NADP(+) site; that span reads GFGTT. Tyr-55 serves as the catalytic Proton donor. His-117 is a binding site for substrate. Residues 166–167, Gln-190, and 216–221 each bind NADP(+); these read SN and YCTLGS. Residue Trp-227 coordinates substrate. 270 to 280 is a binding site for NADP(+); that stretch reads RSFNAKRIKEL.

It belongs to the aldo/keto reductase family. Monomer. In terms of tissue distribution, in brain, highest levels found in olfactory bulb. Moderate levels present in cerebellum, cerebral cortex, hypothalamus and pituitary. Low levels present in amygdala, brain stem, caudate putamen, cingulate cortex, hippocampus, midbrain, and thalamus.

It is found in the cytoplasm. It catalyses the reaction a 3alpha-hydroxysteroid + NADP(+) = a 3-oxosteroid + NADPH + H(+). The enzyme catalyses a 3alpha-hydroxysteroid + NAD(+) = a 3-oxosteroid + NADH + H(+). Potently inhibited by the nonsteroidal anti-inflammatory drugs (NSAID). Besides being a 3-alpha-hydroxysteroid dehydrogenase, the enzyme can accomplish diverse functions: as quinone reductase, as an aromatic alcohol dehydrogenase, as dihydrodiol dehydrogenase, and as 9-, 11-, and 15-hydroxyprostaglandin dehydrogenase. This Rattus norvegicus (Rat) protein is 3-alpha-hydroxysteroid dehydrogenase (Akr1c9).